The sequence spans 251 residues: Ubiquinone/menaquinone biosynthesis C-methyltransferase UbiE (251 aa).

S-adenosyl-L-methionine-binding positions include T74, D95, and 123-124; that span reads NA.

The protein belongs to the class I-like SAM-binding methyltransferase superfamily. MenG/UbiE family.

It carries out the reaction a 2-demethylmenaquinol + S-adenosyl-L-methionine = a menaquinol + S-adenosyl-L-homocysteine + H(+). The catalysed reaction is a 2-methoxy-6-(all-trans-polyprenyl)benzene-1,4-diol + S-adenosyl-L-methionine = a 5-methoxy-2-methyl-3-(all-trans-polyprenyl)benzene-1,4-diol + S-adenosyl-L-homocysteine + H(+). It participates in quinol/quinone metabolism; menaquinone biosynthesis; menaquinol from 1,4-dihydroxy-2-naphthoate: step 2/2. The protein operates within cofactor biosynthesis; ubiquinone biosynthesis. Its function is as follows. Methyltransferase required for the conversion of demethylmenaquinol (DMKH2) to menaquinol (MKH2) and the conversion of 2-polyprenyl-6-methoxy-1,4-benzoquinol (DDMQH2) to 2-polyprenyl-3-methyl-6-methoxy-1,4-benzoquinol (DMQH2). This Shewanella putrefaciens (strain CN-32 / ATCC BAA-453) protein is Ubiquinone/menaquinone biosynthesis C-methyltransferase UbiE.